Here is a 219-residue protein sequence, read N- to C-terminus: Large ribosomal subunit protein bL25 (219 aa).

Residues 176 to 219 form a disordered region; sequence VTVVPPTDEPSEEEVEAMEGESATEEPEVVGEDKEDDEEENKED. The segment covering 184 to 219 has biased composition (acidic residues); it reads EPSEEEVEAMEGESATEEPEVVGEDKEDDEEENKED.

It belongs to the bacterial ribosomal protein bL25 family. CTC subfamily. Part of the 50S ribosomal subunit; part of the 5S rRNA/L5/L18/L25 subcomplex. Contacts the 5S rRNA. Binds to the 5S rRNA independently of L5 and L18.

This is one of the proteins that binds to the 5S RNA in the ribosome where it forms part of the central protuberance. This chain is Large ribosomal subunit protein bL25, found in Staphylococcus epidermidis (strain ATCC 35984 / DSM 28319 / BCRC 17069 / CCUG 31568 / BM 3577 / RP62A).